Consider the following 95-residue polypeptide: Protein TusB (95 aa).

This sequence belongs to the DsrH/TusB family. In terms of assembly, heterohexamer, formed by a dimer of trimers. The hexameric TusBCD complex contains 2 copies each of TusB, TusC and TusD. The TusBCD complex interacts with TusE.

Its subcellular location is the cytoplasm. Functionally, part of a sulfur-relay system required for 2-thiolation of 5-methylaminomethyl-2-thiouridine (mnm(5)s(2)U) at tRNA wobble positions. The sequence is that of Protein TusB from Escherichia coli O81 (strain ED1a).